The sequence spans 576 residues: Mitogen-activated protein kinase 15 (576 aa).

Residues 20 to 50 (RPSSSSSSNNHDQIQNPPTVSNPNDDEDLKK) form a disordered region. The segment covering 28–42 (NNHDQIQNPPTVSNP) has biased composition (polar residues). Positions 90 to 381 (YQIQEVVGKG…AEEALADPYF (292 aa)) constitute a Protein kinase domain. ATP contacts are provided by residues 96 to 104 (VGKGSYGVV) and Lys119. Catalysis depends on Asp216, which acts as the Proton acceptor. Thr252 carries the post-translational modification Phosphothreonine. A TXY motif is present at residues 252–254 (TDY). Position 254 is a phosphotyrosine (Tyr254). Residue Thr257 is modified to Phosphothreonine. Positions 458–535 (EENQGPGGRS…GGGYSARNLM (78 aa)) are disordered. Residues 477-501 (LPRERVPASKNETVEERSNDIERRT) show a composition bias toward basic and acidic residues. Residues 504-520 (AVASTLDSPKASQQAEG) show a composition bias toward polar residues.

It belongs to the protein kinase superfamily. CMGC Ser/Thr protein kinase family. MAP kinase subfamily. Interacts with MKK7. Post-translationally, dually phosphorylated on Thr-252 and Tyr-254, which activates the enzyme.

The enzyme catalyses L-seryl-[protein] + ATP = O-phospho-L-seryl-[protein] + ADP + H(+). It carries out the reaction L-threonyl-[protein] + ATP = O-phospho-L-threonyl-[protein] + ADP + H(+). With respect to regulation, activated by threonine and tyrosine phosphorylation. This is Mitogen-activated protein kinase 15 (MPK15) from Arabidopsis thaliana (Mouse-ear cress).